A 246-amino-acid chain; its full sequence is Carboxy-S-adenosyl-L-methionine synthase (246 aa).

S-adenosyl-L-methionine is bound by residues tyrosine 43, 68-70 (GCS), 93-94 (DN), 121-122 (DI), asparagine 136, and arginine 203.

This sequence belongs to the class I-like SAM-binding methyltransferase superfamily. Cx-SAM synthase family. In terms of assembly, homodimer.

It carries out the reaction prephenate + S-adenosyl-L-methionine = carboxy-S-adenosyl-L-methionine + 3-phenylpyruvate + H2O. Catalyzes the conversion of S-adenosyl-L-methionine (SAM) to carboxy-S-adenosyl-L-methionine (Cx-SAM). The protein is Carboxy-S-adenosyl-L-methionine synthase of Vibrio cholerae serotype O1 (strain ATCC 39541 / Classical Ogawa 395 / O395).